The chain runs to 953 residues: Catenin alpha-2 (953 aa).

At T632 the chain carries Phosphothreonine. S640, S651, and S901 each carry phosphoserine. Over residues 912 to 927 the composition is skewed to basic and acidic residues; that stretch reads EKKPLVKREKPEEFQT. The disordered stretch occupies residues 912 to 939; it reads EKKPLVKREKPEEFQTRVRRGSQKKHIS. Over residues 928-938 the composition is skewed to basic residues; it reads RVRRGSQKKHI. S939 is subject to Phosphoserine.

Belongs to the vinculin/alpha-catenin family. Interacts with CDH1 and CDH2. Interacts with ZNF639; recruits CTNNA2 to the nucleus. Interacts with F-actin. As to expression, expressed almost exclusively in the nervous system.

It localises to the cell membrane. The protein resides in the cytoplasm. Its subcellular location is the cytoskeleton. The protein localises to the cell junction. It is found in the adherens junction. It localises to the cell projection. The protein resides in the axon. Its subcellular location is the nucleus. May function as a linker between cadherin adhesion receptors and the cytoskeleton to regulate cell-cell adhesion and differentiation in the nervous system. Required for proper regulation of cortical neuronal migration and neurite growth. It acts as a negative regulator of Arp2/3 complex activity and Arp2/3-mediated actin polymerization. It thereby suppresses excessive actin branching which would impair neurite growth and stability. Regulates morphological plasticity of synapses and cerebellar and hippocampal lamination during development. Functions in the control of startle modulation. In Mus musculus (Mouse), this protein is Catenin alpha-2 (Ctnna2).